An 88-amino-acid chain; its full sequence is MSDAQGFARDQLRAFIERIERLEEEKKTIADDIKDVYGEAKSMGFDTKILRKVISIRKQDADERLEQEAILDTYLQALGMVPAAEEAA.

Belongs to the UPF0335 family.

The protein is UPF0335 protein NGR_c28390 of Sinorhizobium fredii (strain NBRC 101917 / NGR234).